Consider the following 314-residue polypeptide: Dihydroorotate dehydrogenase (fumarate) (314 aa).

FMN is bound by residues A21 and 45–46 (KS). Substrate contacts are provided by residues K45, 69–73 (NSMGL), and N129. Residue N129 coordinates FMN. Catalysis depends on C132, which acts as the Nucleophile. Residue N134 coordinates substrate. Positions 166 and 195 each coordinate FMN. Position 196–197 (196–197 (NS)) interacts with substrate. Residues G224, 251-252 (GG), and 273-274 (GT) contribute to the FMN site.

It belongs to the dihydroorotate dehydrogenase family. Type 1 subfamily. In terms of assembly, homodimer. Requires FMN as cofactor.

It localises to the cytoplasm. The enzyme catalyses (S)-dihydroorotate + fumarate = orotate + succinate. Its pathway is pyrimidine metabolism; UMP biosynthesis via de novo pathway. Catalyzes the conversion of dihydroorotate to orotate with fumarate as the electron acceptor. Molecular oxygen can replace fumarate in vitro. This Trypanosoma cruzi (strain CL Brener) protein is Dihydroorotate dehydrogenase (fumarate) (pyr4).